The sequence spans 492 residues: Catalase-3 (492 aa).

Active-site residues include H65 and N138. Y348 serves as a coordination point for heme.

It belongs to the catalase family. In terms of assembly, homotetramer. Heme is required as a cofactor.

The protein resides in the peroxisome. It localises to the glyoxysome. The catalysed reaction is 2 H2O2 = O2 + 2 H2O. Occurs in almost all aerobically respiring organisms and serves to protect cells from the toxic effects of hydrogen peroxide. The polypeptide is Catalase-3 (CAT3) (Glycine max (Soybean)).